Here is a 644-residue protein sequence, read N- to C-terminus: uncharacterized protein (644 aa).

Residue 254–261 coordinates ATP; sequence GKMGAGKS.

This is an uncharacterized protein from Bacillus anthracis.